The following is a 189-amino-acid chain: Xanthine phosphoribosyltransferase (189 aa).

Residues Leu20 and Asn27 each contribute to the xanthine site. A 5-phospho-alpha-D-ribose 1-diphosphate-binding site is contributed by 128–132; the sequence is ANGKA. Xanthine is bound at residue Lys156.

It belongs to the purine/pyrimidine phosphoribosyltransferase family. Xpt subfamily. In terms of assembly, homodimer.

It is found in the cytoplasm. The enzyme catalyses XMP + diphosphate = xanthine + 5-phospho-alpha-D-ribose 1-diphosphate. Its pathway is purine metabolism; XMP biosynthesis via salvage pathway; XMP from xanthine: step 1/1. Functionally, converts the preformed base xanthine, a product of nucleic acid breakdown, to xanthosine 5'-monophosphate (XMP), so it can be reused for RNA or DNA synthesis. This chain is Xanthine phosphoribosyltransferase, found in Pseudomonas savastanoi pv. phaseolicola (strain 1448A / Race 6) (Pseudomonas syringae pv. phaseolicola (strain 1448A / Race 6)).